The following is a 947-amino-acid chain: Protein translocase subunit SecA 1 (947 aa).

Residues glutamine 83, 101–105 (GEGKT), and aspartate 490 each bind ATP. The segment at 860–947 (AKAQEQTGQG…KTSKPTRRRG (88 aa)) is disordered. Residues 925-934 (TRRERREAAR) are compositionally biased toward basic and acidic residues. The segment covering 935–947 (KQAKTSKPTRRRG) has biased composition (basic residues).

It belongs to the SecA family. As to quaternary structure, monomer and homodimer. Part of the essential Sec protein translocation apparatus which comprises SecA, SecYEG and auxiliary proteins SecDF. Other proteins may also be involved.

It is found in the cell membrane. The protein resides in the cytoplasm. It carries out the reaction ATP + H2O + cellular proteinSide 1 = ADP + phosphate + cellular proteinSide 2.. Functionally, part of the Sec protein translocase complex. Interacts with the SecYEG preprotein conducting channel. Has a central role in coupling the hydrolysis of ATP to the transfer of proteins into and across the cell membrane, serving as an ATP-driven molecular motor driving the stepwise translocation of polypeptide chains across the membrane. This Mycobacterium sp. (strain JLS) protein is Protein translocase subunit SecA 1.